A 157-amino-acid chain; its full sequence is Large ribosomal subunit protein uL22 (157 aa).

Belongs to the universal ribosomal protein uL22 family. As to quaternary structure, part of the 50S ribosomal subunit.

Its function is as follows. This protein binds specifically to 23S rRNA. It makes multiple contacts with different domains of the 23S rRNA in the assembled 50S subunit and ribosome. Functionally, the globular domain of the protein is located near the polypeptide exit tunnel on the outside of the subunit, while an extended beta-hairpin is found that lines the wall of the exit tunnel in the center of the 70S ribosome. This is Large ribosomal subunit protein uL22 from Methanocorpusculum labreanum (strain ATCC 43576 / DSM 4855 / Z).